The chain runs to 596 residues: Aspartate--tRNA(Asp/Asn) ligase (596 aa).

Residue glutamate 169 coordinates L-aspartate. The segment at 193 to 196 (QLFK) is aspartate. Residue arginine 215 coordinates L-aspartate. ATP is bound by residues 215–217 (RDE) and glutamine 224. Position 447 (histidine 447) interacts with L-aspartate. Glutamate 481 is a binding site for ATP. Residue arginine 488 coordinates L-aspartate. 533–536 (GWDR) contacts ATP. The disordered stretch occupies residues 559–596 (GYDPLTQAPAPITAQQRKEAGVDFKPEAKKADPGATKA). The segment covering 574–590 (QRKEAGVDFKPEAKKAD) has biased composition (basic and acidic residues).

This sequence belongs to the class-II aminoacyl-tRNA synthetase family. Type 1 subfamily. Homodimer.

Its subcellular location is the cytoplasm. The catalysed reaction is tRNA(Asx) + L-aspartate + ATP = L-aspartyl-tRNA(Asx) + AMP + diphosphate. Functionally, aspartyl-tRNA synthetase with relaxed tRNA specificity since it is able to aspartylate not only its cognate tRNA(Asp) but also tRNA(Asn). Reaction proceeds in two steps: L-aspartate is first activated by ATP to form Asp-AMP and then transferred to the acceptor end of tRNA(Asp/Asn). The sequence is that of Aspartate--tRNA(Asp/Asn) ligase from Arthrobacter sp. (strain FB24).